Here is a 1462-residue protein sequence, read N- to C-terminus: Tyrosine-protein phosphatase 69D (1462 aa).

Positions 1–28 are cleaved as a signal peptide; sequence MALLYRRMSMLLNIILAYIFLCAICVQG. 2 Ig-like C2-type domains span residues 29-125 and 131-230; these read SVKQ…TEFQ and PSKV…KEIT. Residues 29 to 805 are Extracellular-facing; the sequence is SVKQEWAEIG…MDYYLSIGVK (777 aa). N-linked (GlcNAc...) asparagine glycans are attached at residues asparagine 40, asparagine 58, asparagine 64, asparagine 85, asparagine 109, asparagine 119, asparagine 162, asparagine 191, asparagine 196, asparagine 209, asparagine 255, asparagine 288, asparagine 302, asparagine 429, asparagine 442, asparagine 451, asparagine 516, asparagine 613, asparagine 701, and asparagine 755. A disulfide bridge links cysteine 45 with cysteine 112. The cysteines at positions 154 and 214 are disulfide-linked. Fibronectin type-III domains follow at residues 237 to 332, 334 to 435, and 439 to 547; these read PQVS…TLSY, PIFI…TMDG, and KPTN…TPDA. A helical transmembrane segment spans residues 806-823; it reads AGAVLLGVILVFIVLWVF. The Cytoplasmic portion of the chain corresponds to 824–1462; that stretch reads HHKKTKNELQ…LHHIAESTLD (639 aa). Tyrosine-protein phosphatase domains follow at residues 893-1156 and 1187-1450; these read FLRE…LLDT and LEVE…IINY. Residues cysteine 1097 and cysteine 1391 each act as phosphocysteine intermediate in the active site.

It belongs to the protein-tyrosine phosphatase family. Receptor class subfamily.

Its subcellular location is the membrane. The catalysed reaction is O-phospho-L-tyrosyl-[protein] + H2O = L-tyrosyl-[protein] + phosphate. Functionally, possible cell adhesion receptor. The sequence is that of Tyrosine-protein phosphatase 69D (Ptp69D) from Drosophila melanogaster (Fruit fly).